The primary structure comprises 123 residues: Large ribosomal subunit protein bL12 (123 aa).

The protein belongs to the bacterial ribosomal protein bL12 family. As to quaternary structure, homodimer. Part of the ribosomal stalk of the 50S ribosomal subunit. Forms a multimeric L10(L12)X complex, where L10 forms an elongated spine to which 2 to 4 L12 dimers bind in a sequential fashion. Binds GTP-bound translation factors.

Its function is as follows. Forms part of the ribosomal stalk which helps the ribosome interact with GTP-bound translation factors. Is thus essential for accurate translation. This is Large ribosomal subunit protein bL12 from Shewanella amazonensis (strain ATCC BAA-1098 / SB2B).